The chain runs to 213 residues: ATP-dependent Clp protease proteolytic subunit (213 aa).

The Nucleophile role is filled by S114. H139 is a catalytic residue.

Belongs to the peptidase S14 family. In terms of assembly, fourteen ClpP subunits assemble into 2 heptameric rings which stack back to back to give a disk-like structure with a central cavity, resembling the structure of eukaryotic proteasomes.

The protein localises to the cytoplasm. It catalyses the reaction Hydrolysis of proteins to small peptides in the presence of ATP and magnesium. alpha-casein is the usual test substrate. In the absence of ATP, only oligopeptides shorter than five residues are hydrolyzed (such as succinyl-Leu-Tyr-|-NHMec, and Leu-Tyr-Leu-|-Tyr-Trp, in which cleavage of the -Tyr-|-Leu- and -Tyr-|-Trp bonds also occurs).. Its function is as follows. Cleaves peptides in various proteins in a process that requires ATP hydrolysis. Has a chymotrypsin-like activity. Plays a major role in the degradation of misfolded proteins. This is ATP-dependent Clp protease proteolytic subunit from Ectopseudomonas mendocina (strain ymp) (Pseudomonas mendocina).